The primary structure comprises 878 residues: Aconitate hydratase A (878 aa).

Residues C426, C492, and C495 each contribute to the [4Fe-4S] cluster site.

This sequence belongs to the aconitase/IPM isomerase family. Monomer. The cofactor is [4Fe-4S] cluster.

The enzyme catalyses citrate = D-threo-isocitrate. The catalysed reaction is (2S,3R)-3-hydroxybutane-1,2,3-tricarboxylate = 2-methyl-cis-aconitate + H2O. The protein operates within carbohydrate metabolism; tricarboxylic acid cycle; isocitrate from oxaloacetate: step 2/2. It functions in the pathway organic acid metabolism; propanoate degradation. Functionally, involved in the catabolism of short chain fatty acids (SCFA) via the tricarboxylic acid (TCA)(acetyl degradation route) and probably the 2-methylcitrate cycle I (propionate degradation route). Catalyzes the reversible isomerization of citrate to isocitrate via cis-aconitate. Could catalyze the hydration of 2-methyl-cis-aconitate to yield (2R,3S)-2-methylisocitrate. The apo form of AcnA functions as a RNA-binding regulatory protein. This Rickettsia conorii (strain ATCC VR-613 / Malish 7) protein is Aconitate hydratase A (acnA).